A 146-amino-acid chain; its full sequence is Glycosylation-dependent cell adhesion molecule 1 (146 aa).

A signal peptide spans 1-19; that stretch reads MKFFTVLLFASLAATSLAA. Residues 25–112 form a disordered region; it reads DELHLRTQPT…SAATSEGKLT (88 aa). Residues 48–60 are compositionally biased toward basic and acidic residues; the sequence is ISKESTSSKDLSK. Phosphoserine is present on residues serine 54, serine 59, and serine 71. The span at 74–106 shows a compositional bias: polar residues; that stretch reads NVGTESTKPQSQEAQDGLRSGSSQQEETTSAAT.

It belongs to the PP3/GlyCAM-1 family. Post-translationally, extensively O-glycosylated. Lymph nodes. Associated with the lumenal surface of the high endothelial venules of peripheral lymph nodes.

It localises to the cell membrane. Its function is as follows. Adhesion molecule that accomplishes cell binding by presenting carbohydrate(s) to the lectin domain of L-selectin. The polypeptide is Glycosylation-dependent cell adhesion molecule 1 (Glycam1) (Rattus norvegicus (Rat)).